A 70-amino-acid polypeptide reads, in one-letter code: Cold shock-like protein CspH (70 aa).

Residues 7–67 form the CSD domain; that stretch reads GIVKTFDCKS…GLRGPTAANV (61 aa).

It is found in the cytoplasm. This Salmonella typhi protein is Cold shock-like protein CspH (cspH).